The chain runs to 369 residues: Aminomethyltransferase (369 aa).

This sequence belongs to the GcvT family. The glycine cleavage system is composed of four proteins: P, T, L and H.

It catalyses the reaction N(6)-[(R)-S(8)-aminomethyldihydrolipoyl]-L-lysyl-[protein] + (6S)-5,6,7,8-tetrahydrofolate = N(6)-[(R)-dihydrolipoyl]-L-lysyl-[protein] + (6R)-5,10-methylene-5,6,7,8-tetrahydrofolate + NH4(+). The glycine cleavage system catalyzes the degradation of glycine. The chain is Aminomethyltransferase from Xanthomonas campestris pv. campestris (strain 8004).